The primary structure comprises 528 residues: Protein WHAT'S THIS FACTOR 1 homolog, chloroplastic (528 aa).

A chloroplast-targeting transit peptide spans 1-73 (MEPKLLLSAH…KTRVVVEPVR (73 aa)). A PORR domain is found at 80–408 (KELTFDSVVQ…VKEKMRALVS (329 aa)). The disordered stretch occupies residues 410–528 (PRFPRRGGPR…FPDGTPREKW (119 aa)). Over residues 418-428 (PRKDEEGREVE) the composition is skewed to basic and acidic residues. A compositionally biased stretch (acidic residues) spans 429–491 (IDGSDADGEE…DDDDEDEEED (63 aa)).

The protein localises to the plastid. It is found in the chloroplast. Functionally, RNA-binding protein involved in group II intron splicing. Binds specific group II introns and promotes their splicing. Functions in the context of a heterodimer with the ribonuclease III domain-containing protein RNC1. The sequence is that of Protein WHAT'S THIS FACTOR 1 homolog, chloroplastic from Arabidopsis thaliana (Mouse-ear cress).